The chain runs to 452 residues: Trigger factor (452 aa).

The 86-residue stretch at 171–256 (GDRVKVNFKG…ATAIETPEEK (86 aa)) folds into the PPIase FKBP-type domain.

The protein belongs to the FKBP-type PPIase family. Tig subfamily.

It localises to the cytoplasm. It carries out the reaction [protein]-peptidylproline (omega=180) = [protein]-peptidylproline (omega=0). Functionally, involved in protein export. Acts as a chaperone by maintaining the newly synthesized protein in an open conformation. Functions as a peptidyl-prolyl cis-trans isomerase. The protein is Trigger factor of Bradyrhizobium sp. (strain BTAi1 / ATCC BAA-1182).